We begin with the raw amino-acid sequence, 351 residues long: Methionine import ATP-binding protein MetN (351 aa).

Positions 2 to 241 (IELRNVTKTY…PKTEIAKKFT (240 aa)) constitute an ABC transporter domain. 38–45 (GKSGAGKS) contacts ATP.

Belongs to the ABC transporter superfamily. Methionine importer (TC 3.A.1.24) family. The complex is composed of two ATP-binding proteins (MetN), two transmembrane proteins (MetI) and a solute-binding protein (MetQ).

The protein resides in the cell inner membrane. The catalysed reaction is L-methionine(out) + ATP + H2O = L-methionine(in) + ADP + phosphate + H(+). It catalyses the reaction D-methionine(out) + ATP + H2O = D-methionine(in) + ADP + phosphate + H(+). Functionally, part of the ABC transporter complex MetNIQ involved in methionine import. Responsible for energy coupling to the transport system. The sequence is that of Methionine import ATP-binding protein MetN from Coxiella burnetii (strain RSA 493 / Nine Mile phase I).